The sequence spans 694 residues: Elongation factor G (694 aa).

Positions 8–287 constitute a tr-type G domain; the sequence is EDYRNFGIMA…AVVEFLPAPT (280 aa). GTP contacts are provided by residues 17–24, 86–90, and 140–143; these read AHIDAGKT, DTPGH, and NKMD.

It belongs to the TRAFAC class translation factor GTPase superfamily. Classic translation factor GTPase family. EF-G/EF-2 subfamily.

It is found in the cytoplasm. Catalyzes the GTP-dependent ribosomal translocation step during translation elongation. During this step, the ribosome changes from the pre-translocational (PRE) to the post-translocational (POST) state as the newly formed A-site-bound peptidyl-tRNA and P-site-bound deacylated tRNA move to the P and E sites, respectively. Catalyzes the coordinated movement of the two tRNA molecules, the mRNA and conformational changes in the ribosome. In Brucella ovis (strain ATCC 25840 / 63/290 / NCTC 10512), this protein is Elongation factor G.